The following is a 335-amino-acid chain: Nuclear envelope-associated protein 2 (335 aa).

2 coiled-coil regions span residues 55 to 85 (RKEA…ELVA) and 125 to 260 (CSVL…LKKK). The Bipartite nuclear localization signal motif lies at 239-260 (KTKELESQLERQRRADQELKKK). The chain crosses the membrane as a helical span at residues 312–329 (FWDTSGFKIVVSMSMLIL).

In terms of assembly, forms homomers and heteromers with NEAP1 and NEAP3. Interacts with SUN1 and SUN2.

The protein resides in the nucleus inner membrane. The protein localises to the nucleus. It localises to the nucleoplasm. The chain is Nuclear envelope-associated protein 2 from Arabidopsis thaliana (Mouse-ear cress).